The sequence spans 319 residues: Ribonucleoside-diphosphate reductase small chain (319 aa).

Fe cation contacts are provided by Asp-70, Glu-101, and His-104. Residue Tyr-108 is part of the active site. Glu-163, Glu-197, and His-200 together coordinate Fe cation. The interaction with R1 stretch occupies residues 313-319 (FSLDVDF).

The protein belongs to the ribonucleoside diphosphate reductase small chain family. Interacts with RNR1/OPG080 subunit. Can interact with host RNR1 supunit. Requires Fe cation as cofactor.

It carries out the reaction a 2'-deoxyribonucleoside 5'-diphosphate + [thioredoxin]-disulfide + H2O = a ribonucleoside 5'-diphosphate + [thioredoxin]-dithiol. Functionally, ribonucleoside-diphosphate reductase holoenzyme provides the precursors necessary for viral DNA synthesis. Allows virus growth in non-dividing cells. Catalyzes the biosynthesis of deoxyribonucleotides from the corresponding ribonucleotides. This chain is Ribonucleoside-diphosphate reductase small chain (OPG048), found in Homo sapiens (Human).